The following is a 388-amino-acid chain: Deoxyuridine 5'-triphosphate nucleotidohydrolase (388 aa).

Residues 77–88 (EEKYDKEQHPGE) are compositionally biased toward basic and acidic residues. 2 disordered regions span residues 77–96 (EEKY…SPLP) and 336–388 (THTP…PRHP). Over residues 351-363 (VDDDVDETEEDEK) the composition is skewed to acidic residues.

Belongs to the dUTPase family. Requires Mg(2+) as cofactor.

Its subcellular location is the virion. The catalysed reaction is dUTP + H2O = dUMP + diphosphate + H(+). It participates in pyrimidine metabolism; dUMP biosynthesis; dUMP from dCTP (dUTP route): step 2/2. In terms of biological role, involved in nucleotide metabolism: produces dUMP, the immediate precursor of thymidine nucleotides and decreases the intracellular concentration of dUTP to avoid uracil incorporation into viral DNA. This chain is Deoxyuridine 5'-triphosphate nucleotidohydrolase, found in Human cytomegalovirus (strain AD169) (HHV-5).